The chain runs to 90 residues: Cell division topological specificity factor 2 (90 aa).

The protein belongs to the MinE family.

Its function is as follows. Prevents the cell division inhibition by proteins MinC and MinD at internal division sites while permitting inhibition at polar sites. This ensures cell division at the proper site by restricting the formation of a division septum at the midpoint of the long axis of the cell. In Syntrophomonas wolfei subsp. wolfei (strain DSM 2245B / Goettingen), this protein is Cell division topological specificity factor 2.